The sequence spans 519 residues: uncharacterized protein (519 aa).

Helical transmembrane passes span I37–M57, G82–A102, M114–Y134, A146–V166, L175–S195, W209–I229, F240–N260, V269–V289, C309–W329, F337–A357, I373–I393, F402–M422, I434–A454, and A475–F495.

Belongs to the major facilitator superfamily.

It localises to the endoplasmic reticulum. The protein localises to the membrane. This is an uncharacterized protein from Schizosaccharomyces pombe (strain 972 / ATCC 24843) (Fission yeast).